The chain runs to 575 residues: Adenine deaminase 1 (575 aa).

It belongs to the metallo-dependent hydrolases superfamily. Adenine deaminase family. The cofactor is Mn(2+).

The catalysed reaction is adenine + H2O + H(+) = hypoxanthine + NH4(+). In Agrobacterium fabrum (strain C58 / ATCC 33970) (Agrobacterium tumefaciens (strain C58)), this protein is Adenine deaminase 1.